A 174-amino-acid polypeptide reads, in one-letter code: Nucleoside-triphosphatase THEP1 (174 aa).

ATP-binding positions include 7 to 14 (GRPGSGKS) and 98 to 105 (CIIIDEIG).

Belongs to the THEP1 NTPase family.

The catalysed reaction is a ribonucleoside 5'-triphosphate + H2O = a ribonucleoside 5'-diphosphate + phosphate + H(+). Functionally, has nucleotide phosphatase activity towards ATP, GTP, CTP, TTP and UTP. May hydrolyze nucleoside diphosphates with lower efficiency. The protein is Nucleoside-triphosphatase THEP1 of Methanothermobacter thermautotrophicus (strain ATCC 29096 / DSM 1053 / JCM 10044 / NBRC 100330 / Delta H) (Methanobacterium thermoautotrophicum).